We begin with the raw amino-acid sequence, 378 residues long: UDP-N-acetylglucosamine--N-acetylmuramyl-(pentapeptide) pyrophosphoryl-undecaprenol N-acetylglucosamine transferase (378 aa).

UDP-N-acetyl-alpha-D-glucosamine-binding positions include 14–16 (TGG), N125, R165, S193, and Q293.

Belongs to the glycosyltransferase 28 family. MurG subfamily.

It localises to the cell inner membrane. The catalysed reaction is di-trans,octa-cis-undecaprenyl diphospho-N-acetyl-alpha-D-muramoyl-L-alanyl-D-glutamyl-meso-2,6-diaminopimeloyl-D-alanyl-D-alanine + UDP-N-acetyl-alpha-D-glucosamine = di-trans,octa-cis-undecaprenyl diphospho-[N-acetyl-alpha-D-glucosaminyl-(1-&gt;4)]-N-acetyl-alpha-D-muramoyl-L-alanyl-D-glutamyl-meso-2,6-diaminopimeloyl-D-alanyl-D-alanine + UDP + H(+). It functions in the pathway cell wall biogenesis; peptidoglycan biosynthesis. Its function is as follows. Cell wall formation. Catalyzes the transfer of a GlcNAc subunit on undecaprenyl-pyrophosphoryl-MurNAc-pentapeptide (lipid intermediate I) to form undecaprenyl-pyrophosphoryl-MurNAc-(pentapeptide)GlcNAc (lipid intermediate II). The protein is UDP-N-acetylglucosamine--N-acetylmuramyl-(pentapeptide) pyrophosphoryl-undecaprenol N-acetylglucosamine transferase of Bartonella henselae (strain ATCC 49882 / DSM 28221 / CCUG 30454 / Houston 1) (Rochalimaea henselae).